A 400-amino-acid polypeptide reads, in one-letter code: Nicotinate phosphoribosyltransferase (400 aa).

Histidine 220 carries the post-translational modification Phosphohistidine; by autocatalysis.

Belongs to the NAPRTase family. Transiently phosphorylated on a His residue during the reaction cycle. Phosphorylation strongly increases the affinity for substrates and increases the rate of nicotinate D-ribonucleotide production. Dephosphorylation regenerates the low-affinity form of the enzyme, leading to product release.

The catalysed reaction is nicotinate + 5-phospho-alpha-D-ribose 1-diphosphate + ATP + H2O = nicotinate beta-D-ribonucleotide + ADP + phosphate + diphosphate. It participates in cofactor biosynthesis; NAD(+) biosynthesis; nicotinate D-ribonucleotide from nicotinate: step 1/1. Functionally, catalyzes the synthesis of beta-nicotinate D-ribonucleotide from nicotinate and 5-phospho-D-ribose 1-phosphate at the expense of ATP. The sequence is that of Nicotinate phosphoribosyltransferase from Escherichia coli O45:K1 (strain S88 / ExPEC).